Here is a 176-residue protein sequence, read N- to C-terminus: Cytochrome b (176 aa).

A run of 3 helical transmembrane segments spans residues 33–53, 77–98, and 113–133; these read FGSL…FLAM, WLLR…YLHV, and WNVG…GYVL. Heme b-binding residues include His-83 and His-97.

The protein belongs to the cytochrome b family. In terms of assembly, the cytochrome bc1 complex contains 11 subunits: 3 respiratory subunits (MT-CYB, CYC1 and UQCRFS1), 2 core proteins (UQCRC1 and UQCRC2) and 6 low-molecular weight proteins (UQCRH/QCR6, UQCRB/QCR7, UQCRQ/QCR8, UQCR10/QCR9, UQCR11/QCR10 and a cleavage product of UQCRFS1). This cytochrome bc1 complex then forms a dimer. Heme b serves as cofactor.

The protein resides in the mitochondrion inner membrane. Functionally, component of the ubiquinol-cytochrome c reductase complex (complex III or cytochrome b-c1 complex) that is part of the mitochondrial respiratory chain. The b-c1 complex mediates electron transfer from ubiquinol to cytochrome c. Contributes to the generation of a proton gradient across the mitochondrial membrane that is then used for ATP synthesis. This Mormopterus kalinowskii (Kalinowski's mastiff bat) protein is Cytochrome b (MT-CYB).